We begin with the raw amino-acid sequence, 874 residues long: Alanine--tRNA ligase (874 aa).

Zn(2+)-binding residues include His-564, His-568, Cys-665, and His-669.

This sequence belongs to the class-II aminoacyl-tRNA synthetase family. Zn(2+) is required as a cofactor.

The protein resides in the cytoplasm. The catalysed reaction is tRNA(Ala) + L-alanine + ATP = L-alanyl-tRNA(Ala) + AMP + diphosphate. Functionally, catalyzes the attachment of alanine to tRNA(Ala) in a two-step reaction: alanine is first activated by ATP to form Ala-AMP and then transferred to the acceptor end of tRNA(Ala). Also edits incorrectly charged Ser-tRNA(Ala) and Gly-tRNA(Ala) via its editing domain. The chain is Alanine--tRNA ligase from Paraburkholderia phytofirmans (strain DSM 17436 / LMG 22146 / PsJN) (Burkholderia phytofirmans).